A 626-amino-acid polypeptide reads, in one-letter code: Transketolase-like protein 2 (626 aa).

Residue histidine 37 participates in substrate binding. Residues serine 40, histidine 77, and 123-125 (GSL) each bind thiamine diphosphate. A Mg(2+)-binding site is contributed by aspartate 155. Thiamine diphosphate contacts are provided by glycine 156 and asparagine 185. Positions 185 and 187 each coordinate Mg(2+). The thiamine diphosphate site is built by lysine 247 and histidine 261. 2 residues coordinate substrate: histidine 261 and serine 348. Thiamine diphosphate contacts are provided by glutamate 369 and phenylalanine 395. Glutamate 369 (proton donor) is an active-site residue. Substrate contacts are provided by histidine 419 and aspartate 427. Glutamine 431 contacts thiamine diphosphate. Arginine 477 lines the substrate pocket.

It belongs to the transketolase family. As to quaternary structure, homodimer. It depends on Mg(2+) as a cofactor. Ca(2+) serves as cofactor. Mn(2+) is required as a cofactor. The cofactor is Co(2+). Requires thiamine diphosphate as cofactor.

The enzyme catalyses D-sedoheptulose 7-phosphate + D-glyceraldehyde 3-phosphate = aldehydo-D-ribose 5-phosphate + D-xylulose 5-phosphate. Plays an essential role in total transketolase activity and cell proliferation in cancer cells; after transfection with anti-TKTL1 siRNA, total transketolase activity dramatically decreases and proliferation was significantly inhibited in cancer cells. Plays a pivotal role in carcinogenesis. This chain is Transketolase-like protein 2 (TKTL2), found in Bos taurus (Bovine).